The primary structure comprises 49 residues: Large ribosomal subunit protein bL33 (49 aa).

It belongs to the bacterial ribosomal protein bL33 family.

The sequence is that of Large ribosomal subunit protein bL33 from Lacticaseibacillus casei (strain BL23) (Lactobacillus casei).